Reading from the N-terminus, the 1325-residue chain is MLPVYQEVKPNPLQDANLCSRVFFWWLNPLFKIGHKRRLEEDDMYSVLPEDRSQHLGEELQGFWDKEVLRAENDAQKPSLTRAIIKCYWKSYLVLGIFTLIEESAKVIQPIFLGKIINYFENYDPMDSVALNTAYAYATVLTFCTLILAILHHLYFYHVQCAGMRLRVAMCHMIYRKALRLSNMAMGKTTTGQIVNLLSNDVNKFDQVTVFLHFLWAGPLQAIAVTALLWMEIGISCLAGMAVLIILLPLQSCFGKLFSSLRSKTATFTDARIRTMNEVITGIRIIKMYAWEKSFSNLITNLRKKEISKILRSSCLRGMNLASFFSASKIIVFVTFTTYVLLGSVITASRVFVAVTLYGAVRLTVTLFFPSAIERVSEAIVSIRRIQTFLLLDEISQRNRQLPSDGKKMVHVQDFTAFWDKASETPTLQGLSFTVRPGELLAVVGPVGAGKSSLLSAVLGELAPSHGLVSVHGRIAYVSQQPWVFSGTLRSNILFGKKYEKERYEKVIKACALKKDLQLLEDGDLTVIGDRGTTLSGGQKARVNLARAVYQDADIYLLDDPLSAVDAEVSRHLFELCICQILHEKITILVTHQLQYLKAASQILILKDGKMVQKGTYTEFLKSGIDFGSLLKKDNEESEQPPVPGTPTLRNRTFSESSVWSQQSSRPSLKDGALESQDTENVPVTLSEENRSEGKVGFQAYKNYFRAGAHWIVFIFLILLNTAAQVAYVLQDWWLSYWANKQSMLNVTVNGGGNVTEKLDLNWYLGIYSGLTVATVLFGIARSLLVFYVLVNSSQTLHNKMFESILKAPVLFFDRNPIGRILNRFSKDIGHLDDLLPLTFLDFIQTLLQVVGVVSVAVAVIPWIAIPLVPLGIIFIFLRRYFLETSRDVKRLESTTRSPVFSHLSSSLQGLWTIRAYKAEERCQELFDAHQDLHSEAWFLFLTTSRWFAVRLDAICAMFVIIVAFGSLILAKTLDAGQVGLALSYALTLMGMFQWCVRQSAEVENMMISVERVIEYTDLEKEAPWEYQKRPPPAWPHEGVIIFDNVNFMYSPGGPLVLKHLTALIKSQEKVGIVGRTGAGKSSLISALFRLSEPEGKIWIDKILTTEIGLHDLRKKMSIIPQEPVLFTGTMRKNLDPFNEHTDEELWNALQEVQLKETIEDLPGKMDTELAESGSNFSVGQRQLVCLARAILRKNQILIIDEATANVDPRTDELIQKKIREKFAHCTVLTIAHRLNTIIDSDKIMVLDSGRLKEYDEPYVLLQNKESLFYKMVQQLGKAEAAALTETAKQVYFKRNYPHIGHTDHMVTNTSNGQPSTLTIFETAL.

In terms of domain architecture, ABC transmembrane type-1 1 spans 92 to 377; sequence YLVLGIFTLI…FFPSAIERVS (286 aa). A run of 7 helical transmembrane segments spans residues 93-113, 136-156, 207-227, 228-248, 328-348, 351-371, and 440-460; these read LVLG…PIFL, AYAT…HLYF, QVTV…AVTA, LLWM…IILL, SKII…VITA, VFVA…FFPS, and LLAV…AVLG. One can recognise an ABC transporter 1 domain in the interval 410–633; the sequence is VHVQDFTAFW…GIDFGSLLKK (224 aa). 445-452 contributes to the ATP binding site; sequence GPVGAGKS. Phosphothreonine occurs at positions 646 and 648. Residues 657–667 show a composition bias toward low complexity; sequence SSVWSQQSSRP. A disordered region spans residues 657 to 688; it reads SSVWSQQSSRPSLKDGALESQDTENVPVTLSE. Residues Ser664 and Ser668 each carry the phosphoserine modification. A helical transmembrane segment spans residues 710–730; sequence HWIVFIFLILLNTAAQVAYVL. The ABC transmembrane type-1 2 domain maps to 714–1005; that stretch reads FIFLILLNTA…CVRQSAEVEN (292 aa). 2 N-linked (GlcNAc...) asparagine glycosylation sites follow: Asn746 and Asn754. 6 helical membrane-spanning segments follow: residues 771 to 791, 836 to 856, 858 to 878, 954 to 974, 977 to 997, and 1038 to 1058; these read LTVA…YVLV, LPLT…VVSV, VAVI…FIFL, AICA…AKTL, GQVG…QWCV, and EGVI…PLVL. The ABC transporter 2 domain maps to 1041–1274; the sequence is IIFDNVNFMY…KESLFYKMVQ (234 aa). ATP is bound at residue 1075-1082; sequence GRTGAGKS. The short motif at 1322-1325 is the PDZ-binding element; sequence ETAL.

Belongs to the ABC transporter superfamily. ABCC family. Conjugate transporter (TC 3.A.1.208) subfamily. In terms of assembly, interacts (via PDZ-binding motif) with SNX27 (via PDZ domain); this interaction accelerates MRP4 internalization. Mg(2+) serves as cofactor. Post-translationally, N-glycosylated; leading to substrate-selective effects on its transport activity. As to expression, widely expressed, with particularly high levels in prostate, but is barely detectable in liver. sinusoidal membrane of hepatocytes.

It localises to the basolateral cell membrane. The protein localises to the apical cell membrane. The enzyme catalyses ATP + H2O + xenobioticSide 1 = ADP + phosphate + xenobioticSide 2.. The catalysed reaction is an S-substituted glutathione(in) + ATP + H2O = an S-substituted glutathione(out) + ADP + phosphate + H(+). It carries out the reaction 17beta-estradiol 17-O-(beta-D-glucuronate)(in) + ATP + H2O = 17beta-estradiol 17-O-(beta-D-glucuronate)(out) + ADP + phosphate + H(+). It catalyses the reaction dehydroepiandrosterone 3-sulfate(in) + ATP + H2O = dehydroepiandrosterone 3-sulfate(out) + ADP + phosphate + H(+). The enzyme catalyses leukotriene C4(in) + ATP + H2O = leukotriene C4(out) + ADP + phosphate + H(+). The catalysed reaction is leukotriene B4(in) + ATP + H2O = leukotriene B4(out) + ADP + phosphate + H(+). It carries out the reaction urate(in) + ATP + H2O = urate(out) + ADP + phosphate + H(+). It catalyses the reaction 3',5'-cyclic GMP(in) + ATP + H2O = 3',5'-cyclic GMP(out) + ADP + phosphate + H(+). The enzyme catalyses 3',5'-cyclic AMP(in) + ATP + H2O = 3',5'-cyclic AMP(out) + ADP + phosphate + H(+). The catalysed reaction is prostaglandin E2(in) + ATP + H2O = prostaglandin E2(out) + ADP + phosphate + H(+). It carries out the reaction prostaglandin E1(in) + ATP + H2O = prostaglandin E1(out) + ADP + phosphate + H(+). It catalyses the reaction glycodeoxycholate(in) + glutathione(in) + ATP + H2O = glycodeoxycholate(out) + glutathione(out) + ADP + phosphate + H(+). The enzyme catalyses cholate(in) + glutathione(in) + ATP + H2O = cholate(out) + glutathione(out) + ADP + phosphate + H(+). The catalysed reaction is glycocholate(in) + glutathione(in) + ATP + H2O = glycocholate(out) + glutathione(out) + ADP + phosphate + H(+). It carries out the reaction taurocholate(in) + glutathione(in) + ATP + H2O = taurocholate(out) + glutathione(out) + ADP + phosphate + H(+). It catalyses the reaction glycochenodeoxycholate(in) + glutathione(in) + ATP + H2O = glycochenodeoxycholate(out) + glutathione(out) + ADP + phosphate + H(+). The enzyme catalyses taurochenodeoxycholate(in) + glutathione(in) + ATP + H2O = taurochenodeoxycholate(out) + glutathione(out) + ADP + phosphate + H(+). The catalysed reaction is glycoursodeoxycholate(in) + glutathione(in) + ATP + H2O = glycoursodeoxycholate(out) + glutathione(out) + ADP + phosphate + H(+). It carries out the reaction tauroursodeoxycholate(in) + glutathione(in) + ATP + H2O = tauroursodeoxycholate(out) + glutathione(out) + ADP + phosphate + H(+). GSH stimulates the transport of MRP4. Urate inhibits methotrexate transport but stimulates cGMP transport. Nonsteroidal anti-inflammatory drugs (NSAIDs) strongly suppress the transport of MRP4 substrates. Functionally, ATP-dependent transporter of the ATP-binding cassette (ABC) family that actively extrudes physiological compounds and xenobiotics from cells. Transports a range of endogenous molecules that have a key role in cellular communication and signaling, including cyclic nucleotides such as cyclic AMP (cAMP) and cyclic GMP (cGMP), bile acids, steroid conjugates, urate, and prostaglandins. Mediates the ATP-dependent efflux of glutathione conjugates such as leukotriene C4 (LTC4) and leukotriene B4 (LTB4) too. The presence of GSH is necessary for the ATP-dependent transport of LTB4, whereas GSH is not required for the transport of LTC4. Mediates the cotransport of bile acids with reduced glutathione (GSH). Transports a wide range of drugs and their metabolites, including anticancer, antiviral and antibiotics molecules. Confers resistance to anticancer agents such as methotrexate. The sequence is that of ATP-binding cassette sub-family C member 4 (ABCC4) from Homo sapiens (Human).